We begin with the raw amino-acid sequence, 427 residues long: Serine hydroxymethyltransferase (427 aa).

Residues L124 and G128 to L130 contribute to the (6S)-5,6,7,8-tetrahydrofolate site. K233 carries the N6-(pyridoxal phosphate)lysine modification.

It belongs to the SHMT family. As to quaternary structure, homodimer. Requires pyridoxal 5'-phosphate as cofactor.

The protein localises to the cytoplasm. The catalysed reaction is (6R)-5,10-methylene-5,6,7,8-tetrahydrofolate + glycine + H2O = (6S)-5,6,7,8-tetrahydrofolate + L-serine. Its pathway is one-carbon metabolism; tetrahydrofolate interconversion. It functions in the pathway amino-acid biosynthesis; glycine biosynthesis; glycine from L-serine: step 1/1. In terms of biological role, catalyzes the reversible interconversion of serine and glycine with tetrahydrofolate (THF) serving as the one-carbon carrier. This reaction serves as the major source of one-carbon groups required for the biosynthesis of purines, thymidylate, methionine, and other important biomolecules. Also exhibits THF-independent aldolase activity toward beta-hydroxyamino acids, producing glycine and aldehydes, via a retro-aldol mechanism. This chain is Serine hydroxymethyltransferase, found in Paracoccus denitrificans (strain Pd 1222).